The primary structure comprises 517 residues: Acetylcholine receptor subunit gamma (517 aa).

The N-terminal stretch at 1-22 (MHGGQGPLLLLLLLAVCLGAQG) is a signal peptide. Residues 23–240 (RNQEERLLAD…VVFYLLIQRK (218 aa)) are Extracellular-facing. 2 N-linked (GlcNAc...) asparagine glycosylation sites follow: asparagine 52 and asparagine 163. Cysteine 150 and cysteine 164 are oxidised to a cystine. The next 3 membrane-spanning stretches (helical) occupy residues 241 to 265 (PLFY…IHFL), 275 to 293 (TVAI…LVAK), and 309 to 330 (LTFL…LNVS). At 331 to 474 (LRSPHTHSMA…WFLVGRVLDR (144 aa)) the chain is on the cytoplasmic side. A helical membrane pass occupies residues 475 to 495 (VCFLAMLSLFICGTAGIFLMA).

The protein belongs to the ligand-gated ion channel (TC 1.A.9) family. Acetylcholine receptor (TC 1.A.9.1) subfamily. Gamma/CHRNG sub-subfamily. As to quaternary structure, pentamer of two alpha chains, and one each of the beta, delta, and gamma (in immature muscle) or epsilon (in mature muscle) chains.

The protein localises to the postsynaptic cell membrane. It localises to the cell membrane. The catalysed reaction is K(+)(in) = K(+)(out). The enzyme catalyses Na(+)(in) = Na(+)(out). Its function is as follows. After binding acetylcholine, the AChR responds by an extensive change in conformation that affects all subunits and leads to opening of an ion-conducting channel across the plasma membrane. In Homo sapiens (Human), this protein is Acetylcholine receptor subunit gamma.